The chain runs to 394 residues: uncharacterized protein (394 aa).

11 consecutive transmembrane segments (helical) span residues 10–30, 50–70, 79–99, 100–120, 138–158, 166–186, 218–238, 243–263, 291–311, 337–357, and 364–384; these read PALIVLMSIATGLAVASNYYA, FIVTAAQLGYAAGLLFLVPLG, IVSMTLLAAGGMLITASSQSL, AMMILGTALTGLFSVVAQILV, TIMSGLLLGILLARTVAGLLA, VFWVASVLMALMALALWRGLP, LLGCLTFANFSILWTSMAFLL, FNYSDGVIGLFGLAGAAGALG, WLAIWFGHTSVLALIIGILVL, LTAGYMTSYFIGGAAGSLISA, and GWAGVCLAGATIALVNLLVWW.

Belongs to the major facilitator superfamily.

It is found in the cell inner membrane. This is an uncharacterized protein from Escherichia coli O157:H7.